A 702-amino-acid polypeptide reads, in one-letter code: Ribosomal RNA large subunit methyltransferase K/L (702 aa).

Positions 43-154 (LIYQSLMWSR…KETASIALDL (112 aa)) constitute a THUMP domain.

It belongs to the methyltransferase superfamily. RlmKL family.

It localises to the cytoplasm. It catalyses the reaction guanosine(2445) in 23S rRNA + S-adenosyl-L-methionine = N(2)-methylguanosine(2445) in 23S rRNA + S-adenosyl-L-homocysteine + H(+). The enzyme catalyses guanosine(2069) in 23S rRNA + S-adenosyl-L-methionine = N(2)-methylguanosine(2069) in 23S rRNA + S-adenosyl-L-homocysteine + H(+). In terms of biological role, specifically methylates the guanine in position 2445 (m2G2445) and the guanine in position 2069 (m7G2069) of 23S rRNA. The protein is Ribosomal RNA large subunit methyltransferase K/L of Salmonella schwarzengrund (strain CVM19633).